A 172-amino-acid chain; its full sequence is Large ribosomal subunit protein bL21m (172 aa).

A mitochondrion-targeting transit peptide spans 1–20 (MIRNIGSNLMKSSSSILLRN).

The protein belongs to the bacterial ribosomal protein bL21 family.

The protein resides in the mitochondrion. The polypeptide is Large ribosomal subunit protein bL21m (mrpl21) (Dictyostelium discoideum (Social amoeba)).